We begin with the raw amino-acid sequence, 483 residues long: Aspartyl/glutamyl-tRNA(Asn/Gln) amidotransferase subunit B (483 aa).

The protein belongs to the GatB/GatE family. GatB subfamily. As to quaternary structure, heterotrimer of A, B and C subunits.

The enzyme catalyses L-glutamyl-tRNA(Gln) + L-glutamine + ATP + H2O = L-glutaminyl-tRNA(Gln) + L-glutamate + ADP + phosphate + H(+). It catalyses the reaction L-aspartyl-tRNA(Asn) + L-glutamine + ATP + H2O = L-asparaginyl-tRNA(Asn) + L-glutamate + ADP + phosphate + 2 H(+). Functionally, allows the formation of correctly charged Asn-tRNA(Asn) or Gln-tRNA(Gln) through the transamidation of misacylated Asp-tRNA(Asn) or Glu-tRNA(Gln) in organisms which lack either or both of asparaginyl-tRNA or glutaminyl-tRNA synthetases. The reaction takes place in the presence of glutamine and ATP through an activated phospho-Asp-tRNA(Asn) or phospho-Glu-tRNA(Gln). This Rickettsia typhi (strain ATCC VR-144 / Wilmington) protein is Aspartyl/glutamyl-tRNA(Asn/Gln) amidotransferase subunit B.